Reading from the N-terminus, the 171-residue chain is Co-chaperone protein HscB homolog (171 aa).

A J domain is found at 2–74; sequence NHFELFRLPF…ISRAEYMLSE (73 aa).

The protein belongs to the HscB family. Interacts with HscA and stimulates its ATPase activity.

Co-chaperone involved in the maturation of iron-sulfur cluster-containing proteins. Seems to help targeting proteins to be folded toward HscA. This chain is Co-chaperone protein HscB homolog, found in Photobacterium profundum (strain SS9).